A 340-amino-acid polypeptide reads, in one-letter code: Large ribosomal subunit protein uL29m (340 aa).

Polar residues predominate over residues 1–10 (MIRSLHTSAV). Residues 1 to 22 (MIRSLHTSAVRQGRKKWPKPLP) are disordered.

This sequence belongs to the universal ribosomal protein uL29 family. Component of the mitochondrial large ribosomal subunit. Mature mitochondrial ribosomes consist of a small (37S) and a large (54S) subunit. The 37S subunit contains at least 33 different proteins and 1 molecule of RNA (15S). The 54S subunit contains at least 45 different proteins and 1 molecule of RNA (21S).

Its subcellular location is the mitochondrion. The polypeptide is Large ribosomal subunit protein uL29m (MRPL4) (Yarrowia lipolytica (strain CLIB 122 / E 150) (Yeast)).